A 273-amino-acid chain; its full sequence is Probable cysteine-rich repeat secretory protein 6 (273 aa).

Positions 1-21 are cleaved as a signal peptide; the sequence is MTRIIDVSLFCFFLFSLGAMS. 2 Gnk2-homologous domains span residues 22–122 and 128–241; these read QPSQ…DNSF and DSPA…ISAL.

The protein belongs to the cysteine-rich repeat secretory protein family.

The protein resides in the secreted. The polypeptide is Probable cysteine-rich repeat secretory protein 6 (CRRSP6) (Arabidopsis thaliana (Mouse-ear cress)).